The sequence spans 234 residues: Uridylate kinase (234 aa).

An ATP-binding site is contributed by 10–11 (GS). Position 44 (glycine 44) interacts with UMP. Glycine 45 and arginine 49 together coordinate ATP. UMP is bound by residues aspartate 66 and 114–120 (ITPGQTT). ATP contacts are provided by threonine 140, tyrosine 146, and aspartate 149.

Belongs to the UMP kinase family. In terms of assembly, homohexamer.

It localises to the cytoplasm. It catalyses the reaction UMP + ATP = UDP + ADP. The protein operates within pyrimidine metabolism; CTP biosynthesis via de novo pathway; UDP from UMP (UMPK route): step 1/1. Inhibited by UTP. Its function is as follows. Catalyzes the reversible phosphorylation of UMP to UDP. The protein is Uridylate kinase of Methanoregula boonei (strain DSM 21154 / JCM 14090 / 6A8).